Here is a 149-residue protein sequence, read N- to C-terminus: Calmodulin (149 aa).

N-acetylalanine is present on Ala2. EF-hand domains lie at 8 to 43 (EQIAEFKEAFSLFDKDGDGTITTKELGTVMRSLGQN), 44 to 79 (PTEAELQDMINEVDADGDGTIDFPEFLTMMARKMKD), 81 to 116 (DSEEEIREAFRVFDKDGDGFISAAELRHVMTNLGEK), and 117 to 149 (LTDEEVDEMIREADIDGDGQVNYEEFVKMMTSK). Ca(2+)-binding residues include Asp21, Asp23, Asp25, Thr27, Glu32, Asp57, Asp59, Asp61, Thr63, Glu68, Asp94, Asp96, Asp98, and Glu105. Residue Lys116 is modified to N6,N6,N6-trimethyllysine. Residues Asp130, Asp132, Asp134, Gln136, and Glu141 each contribute to the Ca(2+) site.

Belongs to the calmodulin family.

Calmodulin mediates the control of a large number of enzymes, ion channels and other proteins by Ca(2+). Among the enzymes to be stimulated by the calmodulin-Ca(2+) complex are a number of protein kinases and phosphatases. This Renilla reniformis (Sea pansy) protein is Calmodulin.